We begin with the raw amino-acid sequence, 294 residues long: ATP synthase gamma chain (294 aa).

It belongs to the ATPase gamma chain family. As to quaternary structure, F-type ATPases have 2 components, CF(1) - the catalytic core - and CF(0) - the membrane proton channel. CF(1) has five subunits: alpha(3), beta(3), gamma(1), delta(1), epsilon(1). CF(0) has three main subunits: a, b and c.

Its subcellular location is the cell inner membrane. Functionally, produces ATP from ADP in the presence of a proton gradient across the membrane. The gamma chain is believed to be important in regulating ATPase activity and the flow of protons through the CF(0) complex. This chain is ATP synthase gamma chain, found in Rhizobium etli (strain CIAT 652).